Consider the following 345-residue polypeptide: D-fructose 1,6-bisphosphatase class 2/sedoheptulose 1,7-bisphosphatase (345 aa).

Mn(2+) is bound by residues aspartate 33, glutamate 57, aspartate 97, and glutamate 100. Residues 100 to 102 (EGT), tyrosine 131, 176 to 178 (RPR), and 198 to 200 (DGD) contribute to the substrate site. Glutamate 225 lines the Mn(2+) pocket.

The protein belongs to the FBPase class 2 family. In terms of assembly, homotetramer. Mn(2+) serves as cofactor.

It carries out the reaction beta-D-fructose 1,6-bisphosphate + H2O = beta-D-fructose 6-phosphate + phosphate. The catalysed reaction is D-sedoheptulose 1,7-bisphosphate + H2O = D-sedoheptulose 7-phosphate + phosphate. The protein operates within carbohydrate biosynthesis; Calvin cycle. Inhibited by AMP and slightly innibited by hydrogen peroxyde. Catalyzes the hydrolysis of fructose 1,6-bisphosphate (Fru 1,6-P2) and sedoheptulose 1,7-bisphosphate (Sed 1,7-P2) to fructose 6-phosphate and sedoheptulose 7-phosphate, respectively. The protein is D-fructose 1,6-bisphosphatase class 2/sedoheptulose 1,7-bisphosphatase of Synechococcus elongatus (strain ATCC 33912 / PCC 7942 / FACHB-805) (Anacystis nidulans R2).